The primary structure comprises 135 residues: Putative pre-16S rRNA nuclease (135 aa).

This sequence belongs to the YqgF nuclease family.

It localises to the cytoplasm. Its function is as follows. Could be a nuclease involved in processing of the 5'-end of pre-16S rRNA. The sequence is that of Putative pre-16S rRNA nuclease from Clostridium novyi (strain NT).